We begin with the raw amino-acid sequence, 351 residues long: Glycerol-3-phosphate dehydrogenase 1-like protein (351 aa).

NAD(+) is bound at residue 12-17 (GSGNWG). Position 122 (Lys-122) interacts with substrate. Residue Ala-155 coordinates NAD(+). Residue Lys-206 is the Proton acceptor of the active site. NAD(+) contacts are provided by Arg-271, Lys-298, and Gln-300. 271-272 (RN) lines the substrate pocket.

The protein belongs to the NAD-dependent glycerol-3-phosphate dehydrogenase family. As to quaternary structure, interacts with SCN5A. Most highly expressed in heart tissue, with lower levels in the skeletal muscle, kidney, lung and other organs.

The protein resides in the cytoplasm. It catalyses the reaction sn-glycerol 3-phosphate + NAD(+) = dihydroxyacetone phosphate + NADH + H(+). Plays a role in regulating cardiac sodium current; decreased enzymatic activity with resulting increased levels of glycerol 3-phosphate activating the DPD1L-dependent SCN5A phosphorylation pathway, may ultimately lead to decreased sodium current; cardiac sodium current may also be reduced due to alterations of NAD(H) balance induced by DPD1L. The sequence is that of Glycerol-3-phosphate dehydrogenase 1-like protein from Homo sapiens (Human).